The sequence spans 154 residues: Prefoldin subunit 2 (154 aa).

The segment covering 1 to 18 (MAENGGRAGKSSGSGTGK) has biased composition (gly residues). Disordered stretches follow at residues 1 to 20 (MAENGGRAGKSSGSGTGKGA) and 124 to 154 (IRLMGEDEKPAAKENSEGAGAKASSAGVLVS). Residues 124 to 139 (IRLMGEDEKPAAKENS) are compositionally biased toward basic and acidic residues. Residues 140–154 (EGAGAKASSAGVLVS) are compositionally biased toward low complexity.

The protein belongs to the prefoldin subunit beta family. In terms of assembly, heterohexamer of two PFD-alpha type and four PFD-beta type subunits. Component of the PAQosome complex which is responsible for the biogenesis of several protein complexes and which consists of R2TP complex members RUVBL1, RUVBL2, RPAP3 and PIH1D1, URI complex members PFDN2, PFDN6, PDRG1, UXT and URI1 as well as ASDURF, POLR2E and DNAAF10/WDR92. Interacts with URI1; the interaction is phosphorylation-dependent and occurs in a growth-dependent manner.

The protein resides in the nucleus. Its subcellular location is the cytoplasm. The protein localises to the mitochondrion. Binds specifically to cytosolic chaperonin (c-CPN) and transfers target proteins to it. Binds to nascent polypeptide chain and promotes folding in an environment in which there are many competing pathways for nonnative proteins. The sequence is that of Prefoldin subunit 2 (PFDN2) from Bos taurus (Bovine).